The chain runs to 416 residues: MDGSMNLGNEPPGDGGGGGGLTRQGSIYSLTFDEFQSSVGKDFGSMNMDELLKNIWSAEETQAMASGVVPVLGGGQEGLQLQRQGSLTLPRTLSQKTVDQVWKDLSKVGSSGVGGSNLSQVAQAQSQSQSQRQQTLGEVTLEEFLVRAGVVREEAQVAARAQIAENNKGGYFGNDANTGFSVEFQQPSPRVVAAGVMGNLGAETANSLQVQGSSLPLNVNGARTTYQQSQQQQPIMPKQPGFGYGTQMGQLNSPGIRGGGLVGLGDQSLTNNVGFVQGASAAIPGALGVGAVSPVTPLSSEGIGKSNGDSSSLSPSPYMFNGGVRGRKSGTVEKVVERRQRRMIKNRESAARSRARKQAYTVELEAEVAKLKEENDELQRKQARIMEMQKNQETEMRNLLQGGPKKKLRRTESGPW.

Residues 1 to 23 form a disordered region; the sequence is MDGSMNLGNEPPGDGGGGGGLTR. The span at 13 to 22 shows a compositional bias: gly residues; sequence GDGGGGGGLT. A phosphoserine mark is found at S26, S45, and S86. T135 carries the post-translational modification Phosphothreonine. The tract at residues 300-326 is disordered; the sequence is SEGIGKSNGDSSSLSPSPYMFNGGVRG. Residues 336-399 enclose the bZIP domain; the sequence is VERRQRRMIK…KNQETEMRNL (64 aa). The basic motif stretch occupies residues 338–357; the sequence is RRQRRMIKNRESAARSRARK. Positions 364–385 are leucine-zipper; it reads LEAEVAKLKEENDELQRKQARI. The tract at residues 388 to 416 is disordered; that stretch reads MQKNQETEMRNLLQGGPKKKLRRTESGPW.

This sequence belongs to the bZIP family. ABI5 subfamily. In terms of assembly, DNA-binding heterodimer. Interacts with ARIA. In terms of processing, the activation by phosphorylation is induced by abscisic acid (ABA). Phosphorylated by SRK2C, SRK2D, SRK2E, SRK2F and SRK2I in vitro. In terms of tissue distribution, expressed in roots, leaves, flowers and siliques but not in seeds.

It localises to the nucleus. In terms of biological role, involved in ABA and stress responses and acts as a positive component of glucose signal transduction. Functions as a transcriptional activator in the ABA-inducible expression of rd29B. Binds specifically to the ABA-responsive element (ABRE) of the rd29B gene promoter. The chain is ABSCISIC ACID-INSENSITIVE 5-like protein 5 (ABF2) from Arabidopsis thaliana (Mouse-ear cress).